A 118-amino-acid polypeptide reads, in one-letter code: Large ribosomal subunit protein bL17 (118 aa).

The protein belongs to the bacterial ribosomal protein bL17 family. Part of the 50S ribosomal subunit. Contacts protein L32.

The chain is Large ribosomal subunit protein bL17 from Onion yellows phytoplasma (strain OY-M).